Consider the following 149-residue polypeptide: UPF0178 protein NT01CX_0440 (149 aa).

It belongs to the UPF0178 family.

In Clostridium novyi (strain NT), this protein is UPF0178 protein NT01CX_0440.